The following is a 354-amino-acid chain: Malate dehydrogenase 2, peroxisomal (354 aa).

Residues 10–18 (RIARISAHL) form a peroxisomal targeting signal PTS2 region. NAD(+)-binding positions include 49–55 (GAAGGIG) and D75. Positions 122 and 128 each coordinate substrate. Residues N135 and 158 to 160 (ISN) contribute to the NAD(+) site. Substrate contacts are provided by N160 and R194. H218 acts as the Proton acceptor in catalysis. Residue M269 coordinates NAD(+).

Belongs to the LDH/MDH superfamily. MDH type 1 family. In terms of assembly, homodimer. Expressed in rosette leaves.

The protein localises to the peroxisome. It carries out the reaction (S)-malate + NAD(+) = oxaloacetate + NADH + H(+). In terms of biological role, catalyzes a reversible NAD-dependent dehydrogenase reaction involved in central metabolism and redox homeostasis between organelle compartments. Peroxisomal NAD-dependent malate dehydrogenase involved in fatty acid beta-oxidation. Reoxidizes NADH from the beta-oxidation and provides NAD for the conversion of fatty acyl-CoA to acetyl-CoA. Does not participate directly in the glyoxylate cycle. Required for maintenance of photosynthetic rates under photorespiratory conditions, and carbon flow during photorespiration. Supplies NADH reductant to the peroxisomal hydroxypyruvate reductase (HPR), which reduces hydroxypyruvate into glycerate in the photorespiratory cycle. This chain is Malate dehydrogenase 2, peroxisomal, found in Arabidopsis thaliana (Mouse-ear cress).